The sequence spans 130 residues: Large ribosomal subunit protein bL19 (130 aa).

Belongs to the bacterial ribosomal protein bL19 family.

Its function is as follows. This protein is located at the 30S-50S ribosomal subunit interface and may play a role in the structure and function of the aminoacyl-tRNA binding site. In Parvibaculum lavamentivorans (strain DS-1 / DSM 13023 / NCIMB 13966), this protein is Large ribosomal subunit protein bL19.